The chain runs to 193 residues: Superoxide dismutase [Fe] (193 aa).

Histidine 27 lines the Fe cation pocket. Lysine 51 bears the N6-acetyllysine mark. Fe cation contacts are provided by histidine 74, aspartate 157, and histidine 161.

It belongs to the iron/manganese superoxide dismutase family. Homodimer. Fe cation is required as a cofactor.

The catalysed reaction is 2 superoxide + 2 H(+) = H2O2 + O2. Its function is as follows. Destroys superoxide anion radicals which are normally produced within the cells and which are toxic to biological systems. The sequence is that of Superoxide dismutase [Fe] (sodB) from Escherichia coli O157:H7.